The primary structure comprises 252 residues: MPRLESGAWSCSCAARARHAARPGEAAPKADAMQSPSPSAGRAEREASGGSATTWRQHLVQRSVVLFVVGAFMALVLNLLQIQRNVTLFPDEVIATLFSSAWWVPPCCGTAAAVVGLLYPCIDSHLGEPHKFKREWASVMRCIAVFVGINHASAKLDFANNVQLSLTLAALSLGLWWTFDRSRSGLGLGITIAFVATLITQFLVYNGVYQYTSPDFLYIRSWLPCIFFSGGVTVGNIGRQLAMGIPEKPHND.

Topologically, residues 1–59 are cytoplasmic; sequence MPRLESGAWSCSCAARARHAARPGEAAPKADAMQSPSPSAGRAEREASGGSATTWRQHL. The disordered stretch occupies residues 22–48; sequence RPGEAAPKADAMQSPSPSAGRAEREAS. Residues 60–82 traverse the membrane as a helical segment; sequence VQRSVVLFVVGAFMALVLNLLQI. Residues 83-101 are Extracellular-facing; the sequence is QRNVTLFPDEVIATLFSSA. The helical transmembrane segment at 102 to 119 threads the bilayer; the sequence is WWVPPCCGTAAAVVGLLY. At 120–134 the chain is on the cytoplasmic side; the sequence is PCIDSHLGEPHKFKR. A helical transmembrane segment spans residues 135–157; sequence EWASVMRCIAVFVGINHASAKLD. Residues 158–160 are Extracellular-facing; that stretch reads FAN. A helical transmembrane segment spans residues 161–179; it reads NVQLSLTLAALSLGLWWTF. Residues 180 to 184 are Cytoplasmic-facing; it reads DRSRS. The helical transmembrane segment at 185 to 206 threads the bilayer; sequence GLGLGITIAFVATLITQFLVYN. Topologically, residues 207 to 220 are extracellular; that stretch reads GVYQYTSPDFLYIR. Residues 221 to 238 traverse the membrane as a helical segment; it reads SWLPCIFFSGGVTVGNIG. Over 239–252 the chain is Cytoplasmic; it reads RQLAMGIPEKPHND. Residues 246–252 carry the KxHxx motif; the sequence is PEKPHND.

It belongs to the INSIG family. In terms of assembly, interacts with SCAP; interaction is direct and only takes place in the presence of sterols; it prevents interaction between SCAP and the coat protein complex II (COPII). Associates with the SCAP-SREBP complex; association is mediated via its interaction with SCAP and only takes place in the presence of sterols.

The protein resides in the endoplasmic reticulum membrane. Its function is as follows. Oxysterol-binding protein that mediates feedback control of cholesterol synthesis by controlling both endoplasmic reticulum to Golgi transport of SCAP and degradation of HMGCR. Acts as a negative regulator of cholesterol biosynthesis by mediating the retention of the SCAP-SREBP complex in the endoplasmic reticulum, thereby blocking the processing of sterol regulatory element-binding proteins (SREBPs). Binds oxysterol, including 25-hydroxycholesterol, regulating interaction with SCAP and retention of the SCAP-SREBP complex in the endoplasmic reticulum. In presence of oxysterol, interacts with SCAP, retaining the SCAP-SREBP complex in the endoplasmic reticulum, thereby preventing SCAP from escorting SREBPs to the Golgi. Sterol deprivation reduces oxysterol-binding, disrupting the interaction between INSIG1 and SCAP, thereby promoting Golgi transport of the SCAP-SREBP complex, followed by processing and nuclear translocation of SREBPs. Also regulates cholesterol synthesis by regulating degradation of HMGCR. The chain is Insulin-induced gene 1 protein from Gallus gallus (Chicken).